A 96-amino-acid polypeptide reads, in one-letter code: uncharacterized protein (96 aa).

A helical transmembrane segment spans residues 1–21; it reads MSDFEIIVGISSLLQVIILNI.

Its subcellular location is the membrane. This is an uncharacterized protein from Saccharomyces cerevisiae (strain ATCC 204508 / S288c) (Baker's yeast).